Consider the following 62-residue polypeptide: Bacteriocin lactacin-F subunit LafX (62 aa).

The propeptide occupies 1-14 (MKLNDKELSKIVGG).

This sequence belongs to the bacteriocin class IIB family. As to quaternary structure, this bacteriocin depends upon the complementation of two peptides for activity: LafA and LafX. Associated with a 180 kDa bacteriocin complex.

Functionally, heat stable bacteriocin active against Enterococcus faecalis and other Lactobacilli. The protein is Bacteriocin lactacin-F subunit LafX (lafX) of Lactobacillus johnsonii (strain CNCM I-12250 / La1 / NCC 533).